The primary structure comprises 788 residues: MVLLRLLVFLFAPVVSDLCSLPCFINVSESQGPGTVLQFLSFNCSSYTPTPTLELLNVQPPTTFFNPPSLARWQGTYVGKLTLSSSAQLDALMVNHYKVQLKFTCGNHVMEGSLSVDVQRDLSHIQCAGQFASPAGEMIQVPETVTPGARLYTLLLPGLELHGAQMSIISAQDLPHFPGPFSINEQGWLQAPSQGLLGQAQKVFQLQISVSFGQRQSCQGMVIVKVLPVPSSQVSFLEQAQNITIPENLAPGSEVVQVQARGVDLRYEILSPVPSPLFSIGRADGVVRTTTPLELARTSGTAVSRLQVKAFEQGQLWASAKLNLTMNVQLVNLWPPRCLPALLVSQIPETAPVGTVLNTLTCEDPDSVGATLDYKLWFRSSSNPASLCLYDRVLEVNATLDCDTPGACFQHAASILVLDGGQPQMTTEVPVLVMVTPINEFSPACAPRTFRVQEDAAPHTLLGSVVGTDMDYPHDNIEYYTSGGPTTFAVDRLSGEVHLLGPLDYEQQRLYRLTVLVIDHGQDQNPNHHLSGSCTITIEVEDVNDHAPECEPPFQELTIYAPLGRSVEVTKMSCQIPQEPQRLIYSYSIVGGNSQNRFILQGAILVHSDLVLGPFWPEQPRTYELLICVADAGPSTPHLSTTATIIVHLVPRRASTVATSTHRTTVPSTMTPMLVTDTEAFWQPQPWFVVVLTATGALLLLALGWLLGRLLQGLAQLLQAPSKPAQALLLNSIQGTEGSIEGFLEAPKMEMSQAPSSVMSLHFDGRAQDSRTGRDYLFNTHTGARRWL.

Positions 1–16 (MVLLRLLVFLFAPVVS) are cleaved as a signal peptide. Residues 17 to 686 (DLCSLPCFIN…DTEAFWQPQP (670 aa)) are Extracellular-facing. 4 Cadherin domains span residues 237–338 (LEQA…PPRC), 339–449 (LPAL…APRT), 444–554 (ACAP…EPPF), and 551–674 (EPPF…TPML). A glycan (N-linked (GlcNAc...) asparagine) is linked at asparagine 242. The helical transmembrane segment at 687 to 707 (WFVVVLTATGALLLLALGWLL) threads the bilayer. The Cytoplasmic portion of the chain corresponds to 708–788 (GRLLQGLAQL…NTHTGARRWL (81 aa)).

The protein localises to the membrane. In terms of biological role, cadherins are calcium-dependent cell adhesion proteins. They preferentially interact with themselves in a homophilic manner in connecting cells; cadherins may thus contribute to the sorting of heterogeneous cell types. In Homo sapiens (Human), this protein is Cadherin-related family member 4 (CDHR4).